A 507-amino-acid chain; its full sequence is uncharacterized protein (507 aa).

Helical transmembrane passes span 11 to 31 (ILCF…IFPI), 97 to 117 (AWIA…YGHL), 125 to 145 (PVSF…GFAP), 149 to 169 (VFAV…IVFY), 187 to 207 (FFNW…CGYW), 209 to 229 (SAAI…LWLP), 283 to 303 (LFSS…WFST), 326 to 346 (FVQA…DLFI), 354 to 374 (LHQV…ALMI), 388 to 408 (LAII…WDAC), 423 to 443 (IGIG…PQMA), and 452 to 472 (IPYI…CFFL).

It belongs to the major facilitator superfamily.

It localises to the membrane. This is an uncharacterized protein from Caenorhabditis elegans.